The sequence spans 468 residues: Nicotinamide phosphoribosyltransferase (468 aa).

Arg-180 contacts diphosphate. Asp-203 lines the beta-nicotinamide D-ribonucleotide pocket. Diphosphate is bound by residues His-229 and Arg-293. His-229 is modified (phosphohistidine; by autocatalysis). Beta-nicotinamide D-ribonucleotide contacts are provided by Asp-335 and Arg-373.

This sequence belongs to the NAPRTase family. As to quaternary structure, homodimer. The dimeric structure consists of two protomers arranged head to tail, with domain A on one protomer interacting with domain B on the other protomer. Post-translationally, phosphorylation at His-229 plays a crucial role in enhancing the substrate affinity and is important for maintaining enzymatic activity.

It carries out the reaction beta-nicotinamide D-ribonucleotide + diphosphate = 5-phospho-alpha-D-ribose 1-diphosphate + nicotinamide + H(+). Its pathway is cofactor biosynthesis; NAD(+) biosynthesis; nicotinamide D-ribonucleotide from 5-phospho-alpha-D-ribose 1-diphosphate and nicotinamide: step 1/1. Its activity is regulated as follows. ATP-dependent autophosphorylation plays a vital role in nicotinamide binding and enzyme activation. Activity is inhibited by FK866. Catalyzes the condensation of nicotinamide with 5-phosphoribosyl-1-pyrophosphate to yield nicotinamide mononucleotide, an intermediate in the biosynthesis of NAD. Plays an important role in the biosynthesis of NAD via the nicotinamide (NAM) salvage pathway. Is also capable of hydrolyzing ATP and shows ATP-dependent autophosphorylation activity. This chain is Nicotinamide phosphoribosyltransferase, found in Xanthomonas campestris pv. campestris (strain 8004).